The following is a 776-amino-acid chain: Angiomotin-like protein 2 (776 aa).

The disordered stretch occupies residues 41–88 (GGAGAGGTGSPQASAEILAPEDTQVLQQATRQEPQGQEHQGGESHLAE). Residues 101–307 (GEELPTYEEA…STQTSSAPSG (207 aa)) are required for interaction with CDH5. Tyr-107 is modified (phosphotyrosine). 3 disordered regions span residues 119–142 (AQQA…GHRS), 169–215 (RNGA…QYPH), and 283–309 (GPLG…SGSA). The segment covering 177-192 (HMSSSHSFPQLARNQQ) has biased composition (polar residues). Over residues 196–213 (PRGPPAEGPEPRGPPPQY) the composition is skewed to pro residues. Residues 220-307 (HETATAVTDP…STQTSSAPSG (88 aa)) are required for interaction with CDH1. Over residues 297 to 306 (ASTQTSSAPS) the composition is skewed to polar residues. Coiled-coil stretches lie at residues 314-509 (METL…LELR) and 543-570 (ALRL…WEQK). Glycyl lysine isopeptide (Lys-Gly) (interchain with G-Cter in ubiquitin) cross-links involve residues Lys-347 and Lys-408. Disordered regions lie at residues 591 to 620 (QRDT…GHRH) and 677 to 743 (TQGW…LDPD). Positions 678–687 (QGWQSLSSSE) are enriched in polar residues. A phosphoserine mark is found at Ser-756 and Ser-759. Residues 773 to 776 (EILI) carry the PDZ-binding motif.

It belongs to the angiomotin family. Part of a complex composed of AMOTL2, MAGI1 and CDH5, within the complex AMOTL2 acts as a scaffold protein for the interaction of MAGI1 with CDH5. The complex is required for coupling actin fibers to cell junctions in endothelial cells. Within the complex AMOTL2 (via its N-terminus) interacts with CDH5. Interacts (via N-terminus) with MAGI1. Interacts (via N-terminus) with ACTB; the interaction facilitates binding of cell junction complexes to actin fibers in endothelial cells. Interacts with CDH1; the interaction may facilitate binding of radial actin fibers to cell junction complexes. Interacts with SRC. Interacts with YAP1; the interaction is required for ubiquitination of AMOTL2 and localization of YAP1 to tight junctions. Interacts with WWP1; the interaction facilitates WWP1 interaction with the Crumbs complex and subsequent WWP1 translocation to the plasma membrane. WPP1 interaction with the Crumbs complex promotes WPP1 monoubiquitination of AMOTL2 which subsequently activates the Hippo signaling pathway. When ubiquitinated interacts with LATS2 (via UBA domain); the interaction promotes LATS2 phosphorylation of YAP1. Interacts (via PPXY motif) with WWTR1/TAZ (via WW domain); the interaction promotes WWTR1/TAZ localization to the cytoplasm and thereby inhibition of its transcriptional properties. Interacts with PHLDB2; interaction may facilitate PHLDB2 localization to the myotube podosome cortex that surrounds the core. Post-translationally, monoubiquitinated at Lys-347 and Lys-408 by Crumbs complex-bound WWP1. De-ubiquitinated at Lys-347 and Lys-408 by USP9X; the interaction may be promoted by cell contact inhibition. Deubiquitination of AMOTL2 negatively regulates Hippo signaling activation. In terms of processing, phosphorylation at Tyr-107 is necessary for efficient binding to SRC and synergistically functioning with SRC to activate the downstream MAPK pathway.

It localises to the recycling endosome. Its subcellular location is the cytoplasm. It is found in the cell projection. The protein localises to the podosome. The protein resides in the cell junction. Its function is as follows. Regulates the translocation of phosphorylated SRC to peripheral cell-matrix adhesion sites. Required for proper architecture of actin filaments. Plays a role in coupling actin fibers to cell junctions in endothelial cells and is therefore required for correct endothelial cell morphology via facilitating transcellular transmission of mechanical force resulting in endothelial cell elongation. Required for the anchoring of radial actin fibers to CDH1 junction complexes at the cell membrane which facilitates organization of radial actin fiber structure and cellular response to contractile forces. This contributes to maintenance of cell area, size, shape, epithelial sheet organization and trophectoderm cell properties that facilitate blastocyst zona hatching. Inhibits the Wnt/beta-catenin signaling pathway, probably by recruiting CTNNB1 to recycling endosomes and hence preventing its translocation to the nucleus. Participates in angiogenesis. Activates the Hippo signaling pathway in response to cell contact inhibition via interaction with and ubiquitination by Crumbs complex-bound WWP1. Ubiquitinated AMOTL2 then interacts with LATS2 which in turn phosphorylates YAP1, excluding it from the nucleus and localizing it to the cytoplasm and tight junctions, therefore ultimately repressing YAP1-driven transcription of target genes. Acts to inhibit WWTR1/TAZ transcriptional coactivator activity via sequestering WWTR1/TAZ in the cytoplasm and at tight junctions. Regulates the size and protein composition of the podosome cortex and core at myofibril neuromuscular junctions. Selectively promotes FGF-induced MAPK activation through SRC. May play a role in the polarity, proliferation and migration of endothelial cells. The chain is Angiomotin-like protein 2 from Canis lupus familiaris (Dog).